Here is a 253-residue protein sequence, read N- to C-terminus: Vitamin B12 import ATP-binding protein BtuD (253 aa).

One can recognise an ABC transporter domain in the interval 4-236 (LQLNNVSVGT…DVLSQVFEVD (233 aa)). 32–39 (GPNGAGKS) provides a ligand contact to ATP.

It belongs to the ABC transporter superfamily. Vitamin B12 importer (TC 3.A.1.13.1) family. The complex is composed of two ATP-binding proteins (BtuD), two transmembrane proteins (BtuC) and a solute-binding protein (BtuF).

The protein resides in the cell inner membrane. The enzyme catalyses an R-cob(III)alamin(out) + ATP + H2O = an R-cob(III)alamin(in) + ADP + phosphate + H(+). Its function is as follows. Part of the ABC transporter complex BtuCDF involved in vitamin B12 import. Responsible for energy coupling to the transport system. The polypeptide is Vitamin B12 import ATP-binding protein BtuD (Yersinia pestis).